The following is a 265-amino-acid chain: Short-chain dehydrogenase/reductase GME11373 (265 aa).

The NADP(+) site is built by Ile26, Asp72, Asn99, and Arg132. Active-site proton donor residues include Ser148 and Ser149. NADP(+)-binding residues include Tyr163, Lys167, and Thr198. The active-site Proton acceptor is the Tyr163. Residue Lys167 is the Lowers pKa of active site Tyr of the active site.

Belongs to the short-chain dehydrogenases/reductases (SDR) family.

Its pathway is secondary metabolite biosynthesis. Its function is as follows. Short-chain dehydrogenase/reductase; part of the gene cluster that mediates the biosynthesis of dibenzodioxocinones such as pestalotiollide B, a novel class of inhibitors against cholesterol ester transfer protein (CEPT). The biosynthesis initiates from condensation of acetate and malonate units catalyzed by the non-reducing PKS pks8/GME11356. Pks8/GME11356 lacks a thioesterase (TE) domain, which is important to the cyclizing of the third ring of atrochrysone carboxylic acid, and the esterase GME11355 might play the role of TE and catalyzes the cyclization reaction of the C ring. The lactamase-like protein GME11357 (or other beta-lactamases in Pestalotiopsis microspora) probably hydrolyzes the thioester bond between the ACP of pks8/GME11356 and the intermediate to release atrochrysone carboxylic acid, which is spontaneously dehydrates to form endocrocin anthrone. Endocrocin anthrone is further converted to emodin via the endocrocin intermediate. Emodin is then oxidized by several enzymes such as the Baeyer-Villiger oxidase GME11358, the oxidoreductase GME11367, the short chain dehydrogenase/reductase GME11373, as well as by other oxidoreductases from the cluster, to modify the A and C rings and open the B ring, and finally yield monodictyphenone. The prenyltransferase GME11375 may catalyze the addition reaction between the C5 side chains and the carbon bone of dibenzodioxocinones. The remaining biochemical reactions to the final product dibenzodioxocinones should be methylation catalyzed by methyltransferase GME11366 and reduction and lactonization reaction catalyzed by a series of oxidordeuctases. The chain is Short-chain dehydrogenase/reductase GME11373 from Pestalotiopsis microspora.